The primary structure comprises 302 residues: D-alanine--D-alanine ligase (302 aa).

In terms of domain architecture, ATP-grasp spans 100–294; sequence KALFRREGLL…FPELVEKLIQ (195 aa). Position 127 to 180 (127 to 180) interacts with ATP; that stretch reads GLNYPIFVKSNIGGSSVNVHLVTNYEELFIAMEALFNAGEEVLLEEAIIGQEVT. Mg(2+) is bound by residues Asp-248, Glu-261, and Asn-263.

The protein belongs to the D-alanine--D-alanine ligase family. Mg(2+) is required as a cofactor. It depends on Mn(2+) as a cofactor.

It localises to the cytoplasm. It carries out the reaction 2 D-alanine + ATP = D-alanyl-D-alanine + ADP + phosphate + H(+). It participates in cell wall biogenesis; peptidoglycan biosynthesis. Its function is as follows. Cell wall formation. In Lawsonia intracellularis (strain PHE/MN1-00), this protein is D-alanine--D-alanine ligase.